We begin with the raw amino-acid sequence, 302 residues long: Acetylglutamate kinase (302 aa).

Substrate is bound by residues 68–69, arginine 90, and asparagine 194; that span reads GG.

This sequence belongs to the acetylglutamate kinase family. ArgB subfamily.

The protein localises to the cytoplasm. It catalyses the reaction N-acetyl-L-glutamate + ATP = N-acetyl-L-glutamyl 5-phosphate + ADP. It participates in amino-acid biosynthesis; L-arginine biosynthesis; N(2)-acetyl-L-ornithine from L-glutamate: step 2/4. Catalyzes the ATP-dependent phosphorylation of N-acetyl-L-glutamate. This Acinetobacter baumannii (strain AB307-0294) protein is Acetylglutamate kinase.